We begin with the raw amino-acid sequence, 340 residues long: MADRSKGFMRAEFVTYAYILLYIALSSGQIFFNKWVLSSKEINFPYPLGLTLLHMIFSSVLCFLLTKVLKIVKVEEGMTLEIYVTSVIPIGAMFAMTLWLGNTAYLYISVAFAQMLKAIMPVAVFILGVAAGLEMMSCRMLLIMSIISFGVLVASYGELNINWIGVVYQMGGVVGEALRLIFMELLVKRKGIKLNPISLMYYVSPCSAICLFVPWIFLEKSKIDGNGPWNFHFVVLTLNSLCTFALNLSVFLVISHTSALTIRVAGVVKDWVVVLVSALLFADTKLTIINLFGYAIAIAGVAAYNNHKLKKEASKVVTTETPGDAESIPLVSQGNTNTER.

10 helical membrane passes run 12 to 32 (EFVT…QIFF), 44 to 64 (FPYP…LCFL), 80 to 100 (LEIY…TLWL), 110 to 130 (VAFA…LGVA), 141 to 161 (LLIM…ELNI), 163 to 183 (WIGV…LIFM), 197 to 217 (ISLM…PWIF), 234 to 254 (VVLT…FLVI), 260 to 282 (LTIR…LLFA), and 286 to 305 (LTII…AAYN). The interval 320 to 340 (ETPGDAESIPLVSQGNTNTER) is disordered. Residues 330–340 (LVSQGNTNTER) are compositionally biased toward polar residues.

The protein belongs to the TPT transporter family. TPT (TC 2.A.7.9) subfamily.

It localises to the membrane. The protein is Probable sugar phosphate/phosphate translocator At3g14410 of Arabidopsis thaliana (Mouse-ear cress).